We begin with the raw amino-acid sequence, 269 residues long: Type II restriction enzyme SfiI (269 aa).

The catalysed reaction is Endonucleolytic cleavage of DNA to give specific double-stranded fragments with terminal 5'-phosphates.. An F and P subtype restriction enzyme that recognizes the double-stranded sequence 5'-GGCCN(5)GGCC-3' and cleaves before N-9. This is Type II restriction enzyme SfiI (sfiIR) from Streptomyces fimbriatus.